The sequence spans 768 residues: Ral guanine nucleotide dissociation stimulator-like 1 (768 aa).

Positions 65–196 (KIRTIKAGTL…RAQNLLEQFQ (132 aa)) constitute an N-terminal Ras-GEF domain. The 270-residue stretch at 232–501 (SEDLVAEQLT…YALSCEIEAA (270 aa)) folds into the Ras-GEF domain. A Phosphoserine modification is found at serine 520. The disordered stretch occupies residues 528-623 (MITSPTPTKE…PPSCNNNPKI (96 aa)). Low complexity-rich tracts occupy residues 541 to 561 (STAS…SCES), 586 to 596 (ESSSSCSSIHS), and 605 to 621 (SSLI…NNNP). The 88-residue stretch at 648–735 (DTCIIRISVE…FDFILRKKNS (88 aa)) folds into the Ras-associating domain.

As to quaternary structure, interacts with Ras. In terms of tissue distribution, expressed in a wide variety of tissues with strong expression being seen in the heart, brain, kidney, spleen and testis.

Its function is as follows. Probable guanine nucleotide exchange factor. The chain is Ral guanine nucleotide dissociation stimulator-like 1 (RGL1) from Homo sapiens (Human).